The primary structure comprises 514 residues: Sugar transport protein 3 (514 aa).

Residues 1 to 19 lie on the Cytoplasmic side of the membrane; sequence MVAEEARKEAMAKSVSGGK. Helical transmembrane passes span 20 to 40, 87 to 107, 124 to 144, 147 to 167, 174 to 194, 207 to 227, 289 to 309, 327 to 347, 356 to 376, 392 to 412, 430 to 450, and 456 to 476; these read ITYF…IFGY, LLTS…LLAS, VSFL…MLII, LLLG…LSEM, GAIS…ANVI, ISLA…LFLP, LVMA…VVAF, MSTL…MLVV, FLIG…IVMV, VVVL…PLGW, VTVA…PPML, and GIFF…QLFL. Residues 477–514 lie on the Cytoplasmic side of the membrane; sequence PETKNVPIEKVVGLWEKHWFWRRMTSKRDIQETTILSH.

Belongs to the major facilitator superfamily. Sugar transporter (TC 2.A.1.1) family.

The protein resides in the membrane. Functionally, mediates an active uptake of hexoses, probably by sugar/hydrogen symport. The polypeptide is Sugar transport protein 3 (STP3) (Arabidopsis thaliana (Mouse-ear cress)).